We begin with the raw amino-acid sequence, 174 residues long: Co-chaperone protein HscB homolog (174 aa).

Residues 2 to 74 form the J domain; it reads NYFELFKFSP…IRRAEHLLSL (73 aa).

Belongs to the HscB family. In terms of assembly, interacts with HscA and stimulates its ATPase activity.

Co-chaperone involved in the maturation of iron-sulfur cluster-containing proteins. Seems to help targeting proteins to be folded toward HscA. This Shewanella sp. (strain W3-18-1) protein is Co-chaperone protein HscB homolog.